Reading from the N-terminus, the 1150-residue chain is Pesticidal crystal protein Cry9Ea (1150 aa).

This sequence belongs to the delta endotoxin family.

Functionally, promotes colloidosmotic lysis by binding to the midgut epithelial cells of insects. The sequence is that of Pesticidal crystal protein Cry9Ea (cry9Ea) from Bacillus thuringiensis subsp. aizawai.